Reading from the N-terminus, the 602-residue chain is Sulfite reductase [NADPH] hemoprotein beta-component (602 aa).

A disordered region spans residues 1–23; it reads MDDTKTASPAPARAYETPPAERP. Positions 458, 464, 503, and 507 each coordinate [4Fe-4S] cluster. C507 contributes to the siroheme binding site.

It belongs to the nitrite and sulfite reductase 4Fe-4S domain family. As to quaternary structure, alpha(8)-beta(8). The alpha component is a flavoprotein, the beta component is a hemoprotein. Requires siroheme as cofactor. [4Fe-4S] cluster is required as a cofactor.

The enzyme catalyses hydrogen sulfide + 3 NADP(+) + 3 H2O = sulfite + 3 NADPH + 4 H(+). It participates in sulfur metabolism; hydrogen sulfide biosynthesis; hydrogen sulfide from sulfite (NADPH route): step 1/1. Functionally, component of the sulfite reductase complex that catalyzes the 6-electron reduction of sulfite to sulfide. This is one of several activities required for the biosynthesis of L-cysteine from sulfate. This is Sulfite reductase [NADPH] hemoprotein beta-component from Methylobacterium sp. (strain 4-46).